A 34-amino-acid polypeptide reads, in one-letter code: Delta-conotoxin AtVIA (34 aa).

Residues 1-4 constitute a propeptide that is removed on maturation; it reads LSKK. Q5 is subject to Pyrrolidone carboxylic acid. 3 disulfides stabilise this stretch: C6–C23, C13–C27, and C22–C31.

In terms of tissue distribution, expressed by the venom duct.

It is found in the secreted. Probable toxin from a worm-hunter cone snail. Shows an excitatory activity on a majority of mouse lumbar dorsal root ganglion (DRG) neurons. Very probably inhibits the inactivation of voltage-gated sodium channels (Nav). The polypeptide is Delta-conotoxin AtVIA (Conus ateralbus (Cone snail)).